The primary structure comprises 365 residues: Class E basic helix-loop-helix protein 22 (365 aa).

3 disordered regions span residues 34 to 93 (AFRS…GGGG), 134 to 156 (GRGS…DGRC), and 188 to 225 (HLHG…KEQK). The span at 82–93 (GGGGAGGGGGGG) shows a compositional bias: gly residues. Residues 191–216 (GGAGLPPGGSTGSGGGGSGGGGGGGS) are compositionally biased toward gly residues. The 55-residue stretch at 226–280 (ALRLNINARERRRMHDLNDALDELRAVIPYAHSPSVRKLSKIATLLLAKNYILMQ) folds into the bHLH domain.

As to quaternary structure, heterodimer with other bHLH proteins, like TCF3/E47. In terms of tissue distribution, kidney, lung, brain and pancreas (insulinoma).

Its subcellular location is the nucleus. Functionally, inhibits DNA binding of TCF3/E47 homodimers and TCF3 (E47)/NEUROD1 heterodimers and acts as a strong repressor of Neurod1 and Myod-responsive genes, probably by heterodimerization with class a basic helix-loop-helix factors. Despite the presence of an intact basic domain, does not bind to DNA. The chain is Class E basic helix-loop-helix protein 22 (BHLHE22) from Mesocricetus auratus (Golden hamster).